The primary structure comprises 474 residues: Methylenetetrahydrofolate--tRNA-(uracil-5-)-methyltransferase TrmFO (474 aa).

9-14 (GGGLAG) contributes to the FAD binding site. The tract at residues 425 to 451 (PPLERMPRNETGKRLRGPEKAALKKRA) is disordered. Residues 429-451 (RMPRNETGKRLRGPEKAALKKRA) show a composition bias toward basic and acidic residues.

Belongs to the MnmG family. TrmFO subfamily. Requires FAD as cofactor.

Its subcellular location is the cytoplasm. The catalysed reaction is uridine(54) in tRNA + (6R)-5,10-methylene-5,6,7,8-tetrahydrofolate + NADH + H(+) = 5-methyluridine(54) in tRNA + (6S)-5,6,7,8-tetrahydrofolate + NAD(+). It carries out the reaction uridine(54) in tRNA + (6R)-5,10-methylene-5,6,7,8-tetrahydrofolate + NADPH + H(+) = 5-methyluridine(54) in tRNA + (6S)-5,6,7,8-tetrahydrofolate + NADP(+). Its function is as follows. Catalyzes the folate-dependent formation of 5-methyl-uridine at position 54 (M-5-U54) in all tRNAs. This Methylorubrum populi (strain ATCC BAA-705 / NCIMB 13946 / BJ001) (Methylobacterium populi) protein is Methylenetetrahydrofolate--tRNA-(uracil-5-)-methyltransferase TrmFO.